We begin with the raw amino-acid sequence, 228 residues long: 2,3-bisphosphoglycerate-dependent phosphoglycerate mutase (228 aa).

Substrate is bound by residues 8–15 (RHGLSEWN), 21–22 (TG), arginine 60, 87–90 (ERHY), lysine 98, 114–115 (RR), and 183–184 (GN). Residue histidine 9 is the Tele-phosphohistidine intermediate of the active site. Glutamate 87 acts as the Proton donor/acceptor in catalysis.

It belongs to the phosphoglycerate mutase family. BPG-dependent PGAM subfamily.

It catalyses the reaction (2R)-2-phosphoglycerate = (2R)-3-phosphoglycerate. The protein operates within carbohydrate degradation; glycolysis; pyruvate from D-glyceraldehyde 3-phosphate: step 3/5. In terms of biological role, catalyzes the interconversion of 2-phosphoglycerate and 3-phosphoglycerate. This Enterococcus faecalis (strain ATCC 700802 / V583) protein is 2,3-bisphosphoglycerate-dependent phosphoglycerate mutase.